The sequence spans 43 residues: Parvalbumin beta (43 aa).

EF-hand domains are found at residues 1-20 (KVFE…LKLF) and 22-43 (LSSA…ALVK). Residues Asp7, Asp9, Ser11, Phe12, Glu14, Glu16, and Glu37 each coordinate Ca(2+).

Detected in muscle and cutaneous mucus. In the skin, detected in cells in the basal region of the glandular epithelium of the dermal mucus glands (at protein level).

The protein resides in the cytoplasm. It is found in the secreted. In terms of biological role, in muscle, parvalbumin is thought to be involved in relaxation after contraction. It binds two calcium ions. This Rana temporaria (European common frog) protein is Parvalbumin beta.